Consider the following 218-residue polypeptide: Type II restriction enzyme KpnI (218 aa).

It catalyses the reaction Endonucleolytic cleavage of DNA to give specific double-stranded fragments with terminal 5'-phosphates.. Its function is as follows. A P subtype restriction enzyme that recognizes the double-stranded sequence 5'-GGTACC-3' and cleaves after C-5. This is Type II restriction enzyme KpnI from Klebsiella pneumoniae.